The chain runs to 293 residues: Formamidopyrimidine-DNA glycosylase (293 aa).

Catalysis depends on P2, which acts as the Schiff-base intermediate with DNA. E3 (proton donor) is an active-site residue. The active-site Proton donor; for beta-elimination activity is K58. DNA is bound by residues H104, R123, and K166. The FPG-type zinc-finger motif lies at 257 to 293; sequence QVYDREGEPCRTDGCGGVVKRFVQNGRSTFWCPKCQR. Catalysis depends on R283, which acts as the Proton donor; for delta-elimination activity.

The protein belongs to the FPG family. In terms of assembly, monomer. It depends on Zn(2+) as a cofactor.

It catalyses the reaction Hydrolysis of DNA containing ring-opened 7-methylguanine residues, releasing 2,6-diamino-4-hydroxy-5-(N-methyl)formamidopyrimidine.. It carries out the reaction 2'-deoxyribonucleotide-(2'-deoxyribose 5'-phosphate)-2'-deoxyribonucleotide-DNA = a 3'-end 2'-deoxyribonucleotide-(2,3-dehydro-2,3-deoxyribose 5'-phosphate)-DNA + a 5'-end 5'-phospho-2'-deoxyribonucleoside-DNA + H(+). Involved in base excision repair of DNA damaged by oxidation or by mutagenic agents. Acts as a DNA glycosylase that recognizes and removes damaged bases. Has a preference for oxidized purines, such as 7,8-dihydro-8-oxoguanine (8-oxoG). Has AP (apurinic/apyrimidinic) lyase activity and introduces nicks in the DNA strand. Cleaves the DNA backbone by beta-delta elimination to generate a single-strand break at the site of the removed base with both 3'- and 5'-phosphates. This is Formamidopyrimidine-DNA glycosylase from Bradyrhizobium sp. (strain BTAi1 / ATCC BAA-1182).